The primary structure comprises 476 residues: 4-(hydroxymethyl)benzenesulfonate dehydrogenase TsaD1 (476 aa).

NAD(+) contacts are provided by residues 154–155 (WN), 178–181 (KAAE), and 230–231 (GS). Residue glutamate 252 is the Proton acceptor of the active site. An NAD(+)-binding site is contributed by leucine 253. Cysteine 286 (nucleophile) is an active-site residue. Glutamate 380 is an NAD(+) binding site.

It belongs to the aldehyde dehydrogenase family. Homodimer.

The catalysed reaction is 4-(hydroxymethyl)benzenesulfonate + NAD(+) = 4-formylbenzenesulfonate + NADH + H(+). Its function is as follows. Involved in the toluene-4-sulfonate degradation pathway. Does not discriminate between the sulfonate and the carboxyl substituents and can also be involved in the p-toluenecarboxylate degradation pathway. The protein is 4-(hydroxymethyl)benzenesulfonate dehydrogenase TsaD1 (tsaD1) of Comamonas testosteroni (Pseudomonas testosteroni).